The primary structure comprises 213 residues: Ubiquitin-conjugating enzyme E2 S (213 aa).

A UBC core domain is found at 13 to 159; that stretch reads QIIRQVAKEV…ARMMTEIHAK (147 aa). The active-site Glycyl thioester intermediate is the C97. A disordered region spans residues 157–213; the sequence is HAKPTTKTAPTKNEETNCPSTSGTQSTSEGPMAKKHAGDKNAAEKKKKEKKRALRRL. Polar residues predominate over residues 174–185; sequence CPSTSGTQSTSE. Residues 192-202 are compositionally biased toward basic and acidic residues; the sequence is HAGDKNAAEKK. Residues 203-213 show a composition bias toward basic residues; that stretch reads KKEKKRALRRL.

It belongs to the ubiquitin-conjugating enzyme family.

It carries out the reaction S-ubiquitinyl-[E1 ubiquitin-activating enzyme]-L-cysteine + [E2 ubiquitin-conjugating enzyme]-L-cysteine = [E1 ubiquitin-activating enzyme]-L-cysteine + S-ubiquitinyl-[E2 ubiquitin-conjugating enzyme]-L-cysteine.. It participates in protein modification; protein ubiquitination. Catalyzes the covalent attachment of ubiquitin to other proteins. Acts as an essential factor of the anaphase promoting complex/cyclosome (APC/C), a cell cycle-regulated ubiquitin ligase that controls progression through mitosis. Acts by specifically elongating polyubiquitin chains initiated by the E2 enzyme UBCH10 on APC/C substrates, enhancing the degradation of APC/C substrates by the proteasome and promoting mitotic exit. The polypeptide is Ubiquitin-conjugating enzyme E2 S (Branchiostoma floridae (Florida lancelet)).